The chain runs to 317 residues: Ribosomal protein L11 methyltransferase (317 aa).

Positions 158, 179, 201, and 244 each coordinate S-adenosyl-L-methionine.

This sequence belongs to the methyltransferase superfamily. PrmA family.

It localises to the cytoplasm. The enzyme catalyses L-lysyl-[protein] + 3 S-adenosyl-L-methionine = N(6),N(6),N(6)-trimethyl-L-lysyl-[protein] + 3 S-adenosyl-L-homocysteine + 3 H(+). Functionally, methylates ribosomal protein L11. The protein is Ribosomal protein L11 methyltransferase of Streptococcus pyogenes serotype M6 (strain ATCC BAA-946 / MGAS10394).